A 155-amino-acid polypeptide reads, in one-letter code: Small ribosomal subunit protein uS7c (155 aa).

The protein belongs to the universal ribosomal protein uS7 family. As to quaternary structure, part of the 30S ribosomal subunit.

It is found in the plastid. It localises to the chloroplast. One of the primary rRNA binding proteins, it binds directly to 16S rRNA where it nucleates assembly of the head domain of the 30S subunit. The sequence is that of Small ribosomal subunit protein uS7c (rps7) from Sagittaria latifolia (Broadleaf arrowhead).